The following is a 461-amino-acid chain: Phosphoglucosamine mutase (461 aa).

The active-site Phosphoserine intermediate is the Ser-113. Mg(2+)-binding residues include Ser-113, Asp-251, Asp-253, and Asp-255. Ser-113 carries the post-translational modification Phosphoserine.

The protein belongs to the phosphohexose mutase family. Requires Mg(2+) as cofactor. Activated by phosphorylation.

The catalysed reaction is alpha-D-glucosamine 1-phosphate = D-glucosamine 6-phosphate. Functionally, catalyzes the conversion of glucosamine-6-phosphate to glucosamine-1-phosphate. The protein is Phosphoglucosamine mutase of Prochlorococcus marinus (strain SARG / CCMP1375 / SS120).